Consider the following 110-residue polypeptide: Protein RnfH (110 aa).

A disordered region spans residues 90-110; that stretch reads VDKTRREGSIEGRKWLPKDSR.

The protein belongs to the UPF0125 (RnfH) family.

The chain is Protein RnfH from Burkholderia mallei (strain NCTC 10229).